We begin with the raw amino-acid sequence, 121 residues long: Small ribosomal subunit protein uS13 (121 aa).

The segment at 94–121 is disordered; it reads GLPVRGQRTRTNARTRKGKRKTVAGKKK.

The protein belongs to the universal ribosomal protein uS13 family. Part of the 30S ribosomal subunit. Forms a loose heterodimer with protein S19. Forms two bridges to the 50S subunit in the 70S ribosome.

In terms of biological role, located at the top of the head of the 30S subunit, it contacts several helices of the 16S rRNA. In the 70S ribosome it contacts the 23S rRNA (bridge B1a) and protein L5 of the 50S subunit (bridge B1b), connecting the 2 subunits; these bridges are implicated in subunit movement. Contacts the tRNAs in the A and P-sites. The sequence is that of Small ribosomal subunit protein uS13 from Treponema pallidum (strain Nichols).